The chain runs to 308 residues: D-alanine--D-alanine ligase (308 aa).

In terms of domain architecture, ATP-grasp spans 104–301 (KQIWQGSDLP…FDELCVAILE (198 aa)). 130 to 185 (IAELGLPVIIKPVHEGSSVGMSKVEKAEDFAAAIEKATQHDAVVMAEKWITGREFT) serves as a coordination point for ATP. Mg(2+)-binding residues include D255, E268, and N270.

The protein belongs to the D-alanine--D-alanine ligase family. Mg(2+) serves as cofactor. It depends on Mn(2+) as a cofactor.

It is found in the cytoplasm. The enzyme catalyses 2 D-alanine + ATP = D-alanyl-D-alanine + ADP + phosphate + H(+). Its pathway is cell wall biogenesis; peptidoglycan biosynthesis. Functionally, cell wall formation. The sequence is that of D-alanine--D-alanine ligase from Acinetobacter baumannii (strain SDF).